We begin with the raw amino-acid sequence, 213 residues long: Peptide methionine sulfoxide reductase MsrA (213 aa).

C53 is a catalytic residue.

It belongs to the MsrA Met sulfoxide reductase family.

The enzyme catalyses L-methionyl-[protein] + [thioredoxin]-disulfide + H2O = L-methionyl-(S)-S-oxide-[protein] + [thioredoxin]-dithiol. It carries out the reaction [thioredoxin]-disulfide + L-methionine + H2O = L-methionine (S)-S-oxide + [thioredoxin]-dithiol. Its function is as follows. Has an important function as a repair enzyme for proteins that have been inactivated by oxidation. Catalyzes the reversible oxidation-reduction of methionine sulfoxide in proteins to methionine. This chain is Peptide methionine sulfoxide reductase MsrA, found in Serratia proteamaculans (strain 568).